Consider the following 79-residue polypeptide: Acyl carrier protein (79 aa).

A Carrier domain is found at 1–79 (MTKEQILVDV…DVVSYIETQV (79 aa)). An O-(pantetheine 4'-phosphoryl)serine modification is found at Ser-39.

The protein belongs to the acyl carrier protein (ACP) family. In terms of processing, 4'-phosphopantetheine is transferred from CoA to a specific serine of apo-ACP by AcpS. This modification is essential for activity because fatty acids are bound in thioester linkage to the sulfhydryl of the prosthetic group.

The protein resides in the cytoplasm. The protein operates within lipid metabolism; fatty acid biosynthesis. Its function is as follows. Carrier of the growing fatty acid chain in fatty acid biosynthesis. The sequence is that of Acyl carrier protein from Exiguobacterium sibiricum (strain DSM 17290 / CCUG 55495 / CIP 109462 / JCM 13490 / 255-15).